The sequence spans 1278 residues: Sterol regulatory element-binding protein cleavage-activating protein (1278 aa).

Topologically, residues 1-18 (MTLTERLREKISQAFYNH) are cytoplasmic. The chain crosses the membrane as a helical span at residues 19–39 (GLFCASYPIPIILFTGLCILA). At 40–279 (CCYPLLKLPL…SLVHVHFKEE (240 aa)) the chain is on the lumenal side. Residues 46–284 (KLPLPGTGPV…HFKEEIGIAE (239 aa)) form a loop-1 region. The interval 60 to 80 (PVKDYSPPPLTSDHKPGEPNE) is disordered. Asn263 carries an N-linked (GlcNAc...) asparagine glycan. A helical membrane pass occupies residues 280-300 (IGIAELIPLVTTYIILFAYIY). Residues 284 to 442 (ELIPLVTTYI…MLFFTTVLSI (159 aa)) enclose the SSD domain. Residues 301 to 312 (FSTRKIDMVKSK) lie on the Cytoplasmic side of the membrane. A helical transmembrane segment spans residues 313–333 (WGLALAAVVTVLSSLLMSVGL). Topologically, residues 334–344 (CTLFGLTPTLN) are lumenal. Residues 345–365 (GGEIFPYLVVVIGLENVLVLT) traverse the membrane as a helical segment. The Cytoplasmic segment spans residues 366-401 (KSVVSTPVDLEVKLRIAQGLSSESWSIMKNMATELG). Residues 402-422 (IVLIGYFTLVPAIQEFCLFAV) form a helical membrane-spanning segment. Position 423 (Val423) is a topological domain, lumenal. A helical transmembrane segment spans residues 424-444 (GLVSDFFLQMLFFTTVLSIDI). At 445–518 (RRMELADLNK…FLARTRLAQR (74 aa)) the chain is on the cytoplasmic side. The short motif at 447 to 452 (MELADL) is the ER export signal element. Glycyl lysine isopeptide (Lys-Gly) (interchain with G-Cter in ubiquitin) cross-links involve residues Lys454 and Lys466. The chain crosses the membrane as a helical span at residues 519–539 (LIMAGTVVWIGILVYTDPAGL). Residues 535–710 (DPAGLRTYLA…QAQRDLTLYK (176 aa)) form a loop-7 region. At 540–707 (RTYLAAQVTE…GTAQAQRDLT (168 aa)) the chain is on the lumenal side. Positions 581–618 (PPDASKLPENQTLPGEPPEPGGLAEGVHDSPAPEVTWG) are disordered. 2 N-linked (GlcNAc...) asparagine glycosylation sites follow: Asn590 and Asn641. Positions 668 to 696 (EGRHPQDGRSAWPPPRPGQGGLWEAGPKG) are disordered. A helical membrane pass occupies residues 708-728 (LYKVAALGLASGIVLVLLLLC). At 729–1278 (LYRVLCPRNY…YVPSVLEKLD (550 aa)) the chain is on the cytoplasmic side. Residues 731-1278 (RVLCPRNYGQ…YVPSVLEKLD (548 aa)) form an interaction with SREBF2 region. The stretch at 771–811 (VLRGHLMDIECLASDGMLLVSCCLAGHVCVWDAQTGDCLTR) is one WD 1 repeat. Phosphoserine occurs at positions 821, 837, 850, 905, and 935. Residues 834 to 904 (ERLSDGGKGG…RYRAGRRAQD (71 aa)) are disordered. 2 WD repeats span residues 951–1001 (PPEK…LRCS) and 1004–1041 (EVSS…ALSP). Arg1050 is subject to Omega-N-methylarginine. WD repeat units lie at residues 1076 to 1113 (AHQK…CLFT), 1116 to 1154 (GHSG…RVSH), 1157 to 1194 (AHRG…KLYS), and 1196 to 1234 (QQDL…LLQT).

The protein belongs to the WD repeat SCAP family. Membrane region forms a homotetramer. Component of the SCAP-SREBP complex (composed of SCAP and SREBF1/SREBP1 or SREBF2/SREBP2); interacts with SREBF1/SREBP1 or SREBF2/SREBP2 through its C-terminal cytoplasmic domain. Forms a ternary complex with INSIG1 or INSIG2 through its transmembrane domains at high sterol concentrations. Interacts with PAQR3; the interaction anchors the SCAP-SREBP complex to the Golgi apparatus in low cholesterol conditions. Interacts with the SEC23-SEC24 complex in a SAR1-GTP-dependent manner through an ER export signal in its third cytoplasmic loop. Interacts with RNF139; the interaction inhibits the interaction of SCAP with SEC24B and hampering the ER to Golgi transport of the SCAP-SREBP complex. Interacts with SPRING1. Post-translationally, ubiquitinated at Lys-454 and Lys-466. RNF145 triggers ubiquitination of SCAP, likely inhibiting SCAP-SREBP complex transport to the Golgi apparatus and the subsequent processing/maturation of SREBF2/SREBP2.

The protein localises to the endoplasmic reticulum membrane. It localises to the golgi apparatus membrane. The protein resides in the cytoplasmic vesicle. It is found in the COPII-coated vesicle membrane. Escort protein required for cholesterol as well as lipid homeostasis. Regulates export of the SCAP-SREBP complex from the endoplasmic reticulum to the Golgi upon low cholesterol, thereby regulating the processing of sterol regulatory element-binding proteins (SREBPs) SREBF1/SREBP1 and SREBF2/SREBP2. At high sterol concentrations, formation of a ternary complex with INSIG (INSIG1 or INSIG2) leads to mask the ER export signal in SCAP, promoting retention of the complex in the endoplasmic reticulum. Low sterol concentrations trigger release of INSIG, a conformational change in the SSD domain of SCAP, unmasking of the ER export signal, promoting recruitment into COPII-coated vesicles and transport of the SCAP-SREBP to the Golgi: in the Golgi, SREBPs are then processed, releasing the transcription factor fragment of SREBPs from the membrane, its import into the nucleus and up-regulation of LDLR, INSIG1 and the mevalonate pathway. Binds cholesterol via its SSD domain. This is Sterol regulatory element-binding protein cleavage-activating protein from Bos taurus (Bovine).